We begin with the raw amino-acid sequence, 139 residues long: Protein UmuD (139 aa).

Residues Ser60 and Lys97 each act as for autocatalytic cleavage activity in the active site.

The protein belongs to the peptidase S24 family.

Involved in UV protection and mutation. Essential for induced (or SOS) mutagenesis. May modify the DNA replication machinery to allow bypass synthesis across a damaged template. The chain is Protein UmuD (umuD) from Escherichia coli O157:H7.